The chain runs to 438 residues: Protein DJ-1 homolog B (438 aa).

The transit peptide at 1 to 45 directs the protein to the chloroplast; the sequence is MASSSLCHRYFNKITVTPFFNTKKLHHYSPRRISLRVNRRSFSIS. 2 consecutive PfpI endopeptidase domains span residues 53 to 220 and 258 to 424; these read KKVL…EQLL and PQIL…EKFY.

This sequence belongs to the peptidase C56 family. In terms of assembly, homodimer.

It localises to the plastid. Its subcellular location is the chloroplast. In terms of biological role, may be involved in oxidative stress response. The sequence is that of Protein DJ-1 homolog B (DJ1B) from Arabidopsis thaliana (Mouse-ear cress).